The sequence spans 296 residues: Inactive uridine phosphorylase B (296 aa).

It belongs to the PNP/UDP phosphorylase family. In terms of assembly, homodimer.

The protein is Inactive uridine phosphorylase B of Schistosoma mansoni (Blood fluke).